The primary structure comprises 314 residues: Methionyl-tRNA formyltransferase (314 aa).

110–113 contributes to the (6S)-5,6,7,8-tetrahydrofolate binding site; it reads SLLP.

Belongs to the Fmt family.

It carries out the reaction L-methionyl-tRNA(fMet) + (6R)-10-formyltetrahydrofolate = N-formyl-L-methionyl-tRNA(fMet) + (6S)-5,6,7,8-tetrahydrofolate + H(+). Functionally, attaches a formyl group to the free amino group of methionyl-tRNA(fMet). The formyl group appears to play a dual role in the initiator identity of N-formylmethionyl-tRNA by promoting its recognition by IF2 and preventing the misappropriation of this tRNA by the elongation apparatus. The polypeptide is Methionyl-tRNA formyltransferase (Lactobacillus acidophilus (strain ATCC 700396 / NCK56 / N2 / NCFM)).